The following is a 295-amino-acid chain: NAD kinase (295 aa).

Aspartate 74 serves as the catalytic Proton acceptor. Residues 74 to 75 (DG), 148 to 149 (ND), histidine 159, arginine 176, aspartate 178, and 189 to 194 (TAYALS) contribute to the NAD(+) site.

Belongs to the NAD kinase family. It depends on a divalent metal cation as a cofactor.

It localises to the cytoplasm. The enzyme catalyses NAD(+) + ATP = ADP + NADP(+) + H(+). Functionally, involved in the regulation of the intracellular balance of NAD and NADP, and is a key enzyme in the biosynthesis of NADP. Catalyzes specifically the phosphorylation on 2'-hydroxyl of the adenosine moiety of NAD to yield NADP. This chain is NAD kinase, found in Legionella pneumophila (strain Corby).